The chain runs to 202 residues: MNARNEQLTSRQQEILDFIRQTVESEGRPPTRAEVCSAFGFKSPNAAETHLRALAAKGAILLEEGRARGIRLAEALGLPLVGRVAAGNPILAAEHVEARIQFDPALFSPRADYLLRVRGMSMRDAGILDGDLIAVHRSHEARNGQVVVARIDDDVTVKTLRRNGPIVELLPANPDFDPIVVDTRSAALELEGIMVGLIRTDH.

The H-T-H motif DNA-binding region spans 32-52 (RAEVCSAFGFKSPNAAETHLR). Active-site for autocatalytic cleavage activity residues include Ser121 and Lys158.

It belongs to the peptidase S24 family. As to quaternary structure, homodimer.

The enzyme catalyses Hydrolysis of Ala-|-Gly bond in repressor LexA.. In terms of biological role, represses a number of genes involved in the response to DNA damage (SOS response), including recA and lexA. In the presence of single-stranded DNA, RecA interacts with LexA causing an autocatalytic cleavage which disrupts the DNA-binding part of LexA, leading to derepression of the SOS regulon and eventually DNA repair. The chain is LexA repressor from Azoarcus sp. (strain BH72).